The following is a 207-amino-acid chain: Small ribosomal subunit protein uS4 (207 aa).

The segment at 22-54 (KSARRSISDKSKFESKPGQHGRTSGSRTSDFGL) is disordered. Positions 27 to 38 (SISDKSKFESKP) are enriched in basic and acidic residues. Over residues 42-52 (GRTSGSRTSDF) the composition is skewed to polar residues. Residues 97-157 (SRLDNVVYRM…EKSKKQLRII (61 aa)) enclose the S4 RNA-binding domain.

The protein belongs to the universal ribosomal protein uS4 family. As to quaternary structure, part of the 30S ribosomal subunit. Contacts protein S5. The interaction surface between S4 and S5 is involved in control of translational fidelity.

In terms of biological role, one of the primary rRNA binding proteins, it binds directly to 16S rRNA where it nucleates assembly of the body of the 30S subunit. Its function is as follows. With S5 and S12 plays an important role in translational accuracy. This Leptothrix cholodnii (strain ATCC 51168 / LMG 8142 / SP-6) (Leptothrix discophora (strain SP-6)) protein is Small ribosomal subunit protein uS4.